The primary structure comprises 521 residues: Glucose-1-phosphate adenylyltransferase large subunit 3, chloroplastic (521 aa).

Residues 1-61 (MDSCCNFSLG…RKLRPGVAYA (61 aa)) constitute a chloroplast transit peptide.

Belongs to the bacterial/plant glucose-1-phosphate adenylyltransferase family. Heterotetramer. Probably are expressed in roots, flowers and/or seeds.

The protein localises to the plastid. Its subcellular location is the chloroplast. It catalyses the reaction alpha-D-glucose 1-phosphate + ATP + H(+) = ADP-alpha-D-glucose + diphosphate. The protein operates within glycan biosynthesis; starch biosynthesis. Activated by 3'phosphoglycerate, inhibited by orthophosphate. Allosteric regulation. Its function is as follows. This protein plays a role in synthesis of starch. It catalyzes the synthesis of the activated glycosyl donor, ADP-glucose from Glc-1-P and ATP. The polypeptide is Glucose-1-phosphate adenylyltransferase large subunit 3, chloroplastic (APL3) (Arabidopsis thaliana (Mouse-ear cress)).